Here is a 584-residue protein sequence, read N- to C-terminus: MVSILTQLNDHFAQALEGQFPSDVTLPTPLVVPASNPKFGDFQCNIALPLAKQLGQPPRAIAMEIVDKVNLSEICEPLTIAGPGFINIKLLPDYLGEQLIKLQQNQQLGVSLVKGEERIVVDFSSPNIAKEMHVGHLRSTIIGDCLARVLEFRGYDVLRLNHVGDWGTQFGMLITYLKEVYPEALVTADALDIGDLVTFYKQAKQRFDQDEQFRETSRQAVVALQAGDAKSIKAWQLLCEQSRREFQLIYDCLDITIEERGESFYNPFLPGVVELLQEKDLLVEDNGAQCVFLDGFTNKDGDRLPLIVQKSDGGYNYATTDLAALNYRLNTDGAEKIIYVTDAGQANHFAQFFQVAEKAGILTDPTQVVHVPFGLVKGEDGKKLKTRAGDTIRLKDLLTEAVTRARQDLETRLTAEERSETEEFKTEVAQRVGIGAVKYADLSQNRTSDYVFSFDKMLALQGNTAPYMLYAYARIQSISREGGIDFAQMDSGEIVLTEPTELVLAKNLLQFADVIETVEISLLPNRLCDYLYELSKVFNRFYENCPVLKASDPQRGSRLLLCDLTARTLKLGLSLLGIPVLDRM.

A 'HIGH' region motif is present at residues 126–136; that stretch reads PNIAKEMHVGH.

The protein belongs to the class-I aminoacyl-tRNA synthetase family. As to quaternary structure, monomer.

The protein localises to the cytoplasm. The catalysed reaction is tRNA(Arg) + L-arginine + ATP = L-arginyl-tRNA(Arg) + AMP + diphosphate. The chain is Arginine--tRNA ligase (argS) from Synechocystis sp. (strain ATCC 27184 / PCC 6803 / Kazusa).